Here is a 287-residue protein sequence, read N- to C-terminus: Protoheme IX farnesyltransferase (287 aa).

A run of 7 helical transmembrane segments spans residues 19–39 (LMVA…VTIT), 100–120 (MVLC…IVAV), 134–154 (FALL…WLAV), 162–182 (MLVV…WLHA), 212–232 (VWFH…LLEW), 233–253 (VGMR…AMLA), and 267–287 (VLCA…VSLF).

The protein belongs to the UbiA prenyltransferase family. Protoheme IX farnesyltransferase subfamily.

It is found in the cell inner membrane. It carries out the reaction heme b + (2E,6E)-farnesyl diphosphate + H2O = Fe(II)-heme o + diphosphate. It participates in porphyrin-containing compound metabolism; heme O biosynthesis; heme O from protoheme: step 1/1. Its function is as follows. Converts heme B (protoheme IX) to heme O by substitution of the vinyl group on carbon 2 of heme B porphyrin ring with a hydroxyethyl farnesyl side group. The polypeptide is Protoheme IX farnesyltransferase (Nitratidesulfovibrio vulgaris (strain ATCC 29579 / DSM 644 / CCUG 34227 / NCIMB 8303 / VKM B-1760 / Hildenborough) (Desulfovibrio vulgaris)).